Consider the following 309-residue polypeptide: Low density lipoprotein receptor adapter protein 1-A (309 aa).

Residues 41–195 (LLEGMLFHLK…SGGEGASSSQ (155 aa)) form the PID domain. The segment at 179–199 (EKREKSGSGGEGASSSQSDGS) is disordered. The short motif at 213–217 (LLDLE) is the Clathrin box element. The tract at residues 250–277 (WELDDGLDEAFARLAESRTNPQVLDIGL) is AP-2 complex binding. The [DE]-X(1,2)-F-X-X-[FL]-X-X-X-R motif signature appears at 258-267 (EAFARLAESR).

In terms of assembly, interacts (via PID domain) with ldlr (via NPXY motif). Binds to soluble clathrin trimers and to the adapter protein complex 2 (AP-2, beta 2 subunit). Binds to phosphoinositides, which regulate clathrin bud assembly at the cell surface. Interacts with the VLDL receptor (vldlr). Interacts with the vitellogenin receptor. Expressed at high level during oogenesis and embryogenesis. Found in the oocyte vegetal cortex. Found at low level in the adult liver and spleen. Found at very low level in testis and heart.

It localises to the cytoplasm. Its function is as follows. Adapter protein (clathrin-associated sorting protein (CLASP)) required for efficient endocytosis of the LDL receptor (LDLR). Also involved in the vitellogenin receptor mediated endocytosis of nutrients during oogenesis. The protein is Low density lipoprotein receptor adapter protein 1-A of Xenopus laevis (African clawed frog).